Reading from the N-terminus, the 355-residue chain is Peptide chain release factor 1 (355 aa).

An N5-methylglutamine modification is found at Q231.

The protein belongs to the prokaryotic/mitochondrial release factor family. In terms of processing, methylated by PrmC. Methylation increases the termination efficiency of RF1.

Its subcellular location is the cytoplasm. In terms of biological role, peptide chain release factor 1 directs the termination of translation in response to the peptide chain termination codons UAG and UAA. This Wolinella succinogenes (strain ATCC 29543 / DSM 1740 / CCUG 13145 / JCM 31913 / LMG 7466 / NCTC 11488 / FDC 602W) (Vibrio succinogenes) protein is Peptide chain release factor 1.